A 202-amino-acid chain; its full sequence is MLNYKLILLFSSFLQLISFSGFMICCLTSPIIRNWGLAQAAGVSYGTFGYCKTLNSFSCSRVRLIYNTSKEILPGPSLERWWLSPKARHTIGGLLISIPVATCLTFISFALPLVIIFLFQTGGTNVSLITSNAILHILTLLSTIFACTVILLLCMHRDPVTISSLYDLVWLANCSLFPLLVIGVHFLSFRFDTSAQSDRKHS.

The first 18 residues, 1–18 (MLNYKLILLFSSFLQLIS), serve as a signal peptide directing secretion. Transmembrane regions (helical) follow at residues 91 to 107 (IGGLLISIPVATCLTFI), 137 to 155 (ILTLLSTIFACTVILLLCM), and 168 to 189 (LVWLANCSLFPLLVIGVHFLSF).

The protein localises to the membrane. The sequence is that of Protein DCV1 (DCV1) from Saccharomyces cerevisiae (strain ATCC 204508 / S288c) (Baker's yeast).